Reading from the N-terminus, the 114-residue chain is N(4)-acetylcytidine amidohydrolase (114 aa).

The ASCH domain occupies 8 to 93 (TFFEFLTPLV…ALIQEIYPNI (86 aa)). Residue K22 is the Proton acceptor of the active site. The Nucleophile role is filled by T25. The Proton donor role is filled by E75.

It belongs to the N(4)-acetylcytidine amidohydrolase family.

It carries out the reaction N(4)-acetylcytidine + H2O = cytidine + acetate + H(+). It catalyses the reaction N(4)-acetyl-2'-deoxycytidine + H2O = 2'-deoxycytidine + acetate + H(+). The catalysed reaction is N(4)-acetylcytosine + H2O = cytosine + acetate + H(+). In terms of biological role, catalyzes the hydrolysis of N(4)-acetylcytidine (ac4C). This chain is N(4)-acetylcytidine amidohydrolase, found in Vibrio cholerae serotype O1 (strain ATCC 39541 / Classical Ogawa 395 / O395).